The primary structure comprises 74 residues: uncharacterized protein (74 aa).

This is an uncharacterized protein from Archaeoglobus fulgidus (strain ATCC 49558 / DSM 4304 / JCM 9628 / NBRC 100126 / VC-16).